A 372-amino-acid chain; its full sequence is tRNA-specific 2-thiouridylase MnmA (372 aa).

Residues 16-23 (GMSGGVDS) and methionine 42 each bind ATP. The interaction with target base in tRNA stretch occupies residues 102–104 (NPD). Cysteine 107 serves as the catalytic Nucleophile. A disulfide bridge connects residues cysteine 107 and cysteine 205. Residue glycine 132 coordinates ATP. Positions 155 to 157 (KDQ) are interaction with tRNA. Cysteine 205 serves as the catalytic Cysteine persulfide intermediate. Positions 317–318 (RY) are interaction with tRNA.

It belongs to the MnmA/TRMU family.

The protein localises to the cytoplasm. It catalyses the reaction S-sulfanyl-L-cysteinyl-[protein] + uridine(34) in tRNA + AH2 + ATP = 2-thiouridine(34) in tRNA + L-cysteinyl-[protein] + A + AMP + diphosphate + H(+). Its function is as follows. Catalyzes the 2-thiolation of uridine at the wobble position (U34) of tRNA, leading to the formation of s(2)U34. The protein is tRNA-specific 2-thiouridylase MnmA of Shewanella denitrificans (strain OS217 / ATCC BAA-1090 / DSM 15013).